The primary structure comprises 297 residues: Transmembrane protein 178A (297 aa).

The signal sequence occupies residues 1 to 25; sequence MEPRALVTALSLGLSLCSLGLLVTA. Residues 26–179 are Extracellular-facing; the sequence is IFTDHWYETD…LLHLRRITAG (154 aa). A compositionally biased stretch (basic and acidic residues) spans 41 to 57; it reads ESCERSRAGADPPDQKN. The tract at residues 41–86 is disordered; sequence ESCERSRAGADPPDQKNRLMPLSHLPLRDSPPLGRRLLPGGPGRSD. Low complexity predominate over residues 68 to 79; sequence RDSPPLGRRLLP. Asn158 carries an N-linked (GlcNAc...) asparagine glycan. Residues 180–200 form a helical membrane-spanning segment; the sequence is FLGMAVAVLLCGCIVATVSFF. The Cytoplasmic portion of the chain corresponds to 201–208; sequence WEESLTQH. The chain crosses the membrane as a helical span at residues 209–229; that stretch reads VAGLLFLMTGIFCTISLCTYA. The Extracellular portion of the chain corresponds to 230–257; the sequence is ASVSYDLNRVPKLIYSLPHDVEHGYSWS. The chain crosses the membrane as a helical span at residues 258 to 278; the sequence is IFCAWCSLGFIVAAGGLCIAY. The Cytoplasmic portion of the chain corresponds to 279 to 297; sequence PFISRTKIAHLKSGRDSTV.

It belongs to the TMEM178 family. Interacts with STIM1.

It localises to the endoplasmic reticulum membrane. Functionally, acts as a negative regulator of osteoclast differentiation in basal and inflammatory conditions by regulating TNFSF11-induced Ca (2+) fluxes, thereby controlling the induction of NFATC1. The protein is Transmembrane protein 178A (Tmem178a) of Rattus norvegicus (Rat).